The chain runs to 488 residues: Rhamnulokinase (488 aa).

Alanine 11–arginine 15 serves as a coordination point for ATP. Residues alanine 79 and histidine 234–threonine 236 each bind substrate. The Proton acceptor role is filled by aspartate 235. Position 257 (threonine 257) interacts with ATP. Asparagine 294 contributes to the substrate binding site. ATP is bound by residues glutamine 302 and glycine 401.

It belongs to the rhamnulokinase family. Mg(2+) is required as a cofactor.

It catalyses the reaction L-rhamnulose + ATP = L-rhamnulose 1-phosphate + ADP + H(+). Its pathway is carbohydrate degradation; L-rhamnose degradation; glycerone phosphate from L-rhamnose: step 2/3. Involved in the catabolism of L-rhamnose (6-deoxy-L-mannose). Catalyzes the transfer of the gamma-phosphate group from ATP to the 1-hydroxyl group of L-rhamnulose to yield L-rhamnulose 1-phosphate. In Lactiplantibacillus plantarum (strain ATCC BAA-793 / NCIMB 8826 / WCFS1) (Lactobacillus plantarum), this protein is Rhamnulokinase.